Consider the following 422-residue polypeptide: Synaptotagmin-15 (422 aa).

At 1-4 (MAEQ) the chain is on the extracellular side. The chain crosses the membrane as a helical; Signal-anchor for type III membrane protein span at residues 5–27 (LALVIGCIIGGLLLLIGISCCLW). The Cytoplasmic segment spans residues 28-422 (KRLCTTFTYE…WHALCRPMEP (395 aa)). C2 domains lie at 148-267 (CLGR…VIWR) and 279-400 (EFGD…EHWN).

It belongs to the synaptotagmin family. In terms of assembly, homodimer.

It localises to the membrane. May be involved in the trafficking and exocytosis of secretory vesicles in non-neuronal tissues. The polypeptide is Synaptotagmin-15 (Syt15) (Rattus norvegicus (Rat)).